A 476-amino-acid chain; its full sequence is Glycogen synthase (476 aa).

Lys-15 provides a ligand contact to ADP-alpha-D-glucose.

Belongs to the glycosyltransferase 1 family. Bacterial/plant glycogen synthase subfamily.

It carries out the reaction [(1-&gt;4)-alpha-D-glucosyl](n) + ADP-alpha-D-glucose = [(1-&gt;4)-alpha-D-glucosyl](n+1) + ADP + H(+). It functions in the pathway glycan biosynthesis; glycogen biosynthesis. Synthesizes alpha-1,4-glucan chains using ADP-glucose. This Yersinia enterocolitica serotype O:8 / biotype 1B (strain NCTC 13174 / 8081) protein is Glycogen synthase.